Reading from the N-terminus, the 472-residue chain is Calcitonin gene-related peptide type 1 receptor (472 aa).

The signal sequence occupies residues 1–28 (MGLLLRSALFKYIIIVLIMLNLRGYVLA). Topologically, residues 29–149 (EQEQGSQIPL…FTHEKVKTAL (121 aa)) are extracellular. Disulfide bonds link Cys58-Cys84, Cys75-Cys115, and Cys98-Cys137. Residues Asn76, Asn128, and Asn133 are each glycosylated (N-linked (GlcNAc...) asparagine). Residues 150-174 (NLYYLTIIGHGLSIASLLISLGIFF) traverse the membrane as a helical segment. The Cytoplasmic segment spans residues 175–185 (YFKNLSCQRIT). A helical transmembrane segment spans residues 186-208 (LHKNLFFSFVCNSIITIISLSAV). Over 209–219 (ANNQALVATNP) the chain is Extracellular. The helical transmembrane segment at 220-248 (VSCKISQFIHLYLMGCNYFWMLCEGIYLH) threads the bilayer. Residues 249–262 (TLIVVAVFAEKQHL) are Cytoplasmic-facing. The chain crosses the membrane as a helical span at residues 263–283 (MWYYLLGWGFPLIPACIHAVA). Over 284 to 299 (RSLYYNDNCWISSETH) the chain is Extracellular. Residues 300–324 (LLYIIHGPICAALLVNLFFLLNIVR) form a helical membrane-spanning segment. Residues 325-339 (VLITKLKVTHQAESN) are Cytoplasmic-facing. A helical transmembrane segment spans residues 340–361 (LYMKAVRATLILVPLLGIEFVL). Over 362-376 (FPWKPEGRIAEEIYD) the chain is Extracellular. The helical transmembrane segment at 377–397 (YVMHILMHYQGLLVATIFCFF) threads the bilayer. The Cytoplasmic segment spans residues 398–472 (NGEVQAVLKR…VFFKTEKQYM (75 aa)).

This sequence belongs to the G-protein coupled receptor 2 family.

The protein resides in the cell membrane. In terms of biological role, may function as G protein-coupled receptor for calcitonin-gene-related peptides and adrenomedullin. Specificity may be modulated by accessory proteins. May activate cAMP-dependent pathway. The polypeptide is Calcitonin gene-related peptide type 1 receptor (calcrl) (Xenopus tropicalis (Western clawed frog)).